Here is a 146-residue protein sequence, read N- to C-terminus: Hemoglobin subunit beta (146 aa).

The residue at position 1 (Val-1) is an N-acetylvaline. The 145-residue stretch at 2 to 146 folds into the Globin domain; the sequence is NLTAAEKTQV…VANALAHKYH (145 aa). Thr-12 is modified (phosphothreonine). At Lys-59 the chain carries N6-acetyllysine. A heme b-binding site is contributed by His-63. N6-acetyllysine is present on Lys-82. His-92 contributes to the heme b binding site. Cys-93 is modified (S-nitrosocysteine). Lys-144 is subject to N6-acetyllysine.

Belongs to the globin family. In terms of assembly, heterotetramer of two alpha chains and two beta chains. In terms of tissue distribution, red blood cells.

Involved in oxygen transport from the lung to the various peripheral tissues. In Loxodonta africana (African elephant), this protein is Hemoglobin subunit beta (HBB).